The following is a 243-amino-acid chain: 5'-methylthioadenosine/S-adenosylhomocysteine nucleosidase (243 aa).

Catalysis depends on Glu-12, which acts as the Proton acceptor. Substrate-binding positions include Gly-78, Met-158, and 179 to 180; that span reads ME. The active-site Proton donor is the Asp-203.

Belongs to the PNP/UDP phosphorylase family. MtnN subfamily.

The enzyme catalyses S-adenosyl-L-homocysteine + H2O = S-(5-deoxy-D-ribos-5-yl)-L-homocysteine + adenine. It carries out the reaction S-methyl-5'-thioadenosine + H2O = 5-(methylsulfanyl)-D-ribose + adenine. It catalyses the reaction 5'-deoxyadenosine + H2O = 5-deoxy-D-ribose + adenine. It functions in the pathway amino-acid biosynthesis; L-methionine biosynthesis via salvage pathway; S-methyl-5-thio-alpha-D-ribose 1-phosphate from S-methyl-5'-thioadenosine (hydrolase route): step 1/2. Functionally, catalyzes the irreversible cleavage of the glycosidic bond in both 5'-methylthioadenosine (MTA) and S-adenosylhomocysteine (SAH/AdoHcy) to adenine and the corresponding thioribose, 5'-methylthioribose and S-ribosylhomocysteine, respectively. Also cleaves 5'-deoxyadenosine, a toxic by-product of radical S-adenosylmethionine (SAM) enzymes, into 5-deoxyribose and adenine. The protein is 5'-methylthioadenosine/S-adenosylhomocysteine nucleosidase of Colwellia psychrerythraea (strain 34H / ATCC BAA-681) (Vibrio psychroerythus).